Consider the following 143-residue polypeptide: Peptide methionine sulfoxide reductase MsrB (143 aa).

The region spanning D16 to K139 is the MsrB domain. Zn(2+) is bound by residues C55, C58, C104, and C107. C128 serves as the catalytic Nucleophile.

Belongs to the MsrB Met sulfoxide reductase family. The cofactor is Zn(2+).

The catalysed reaction is L-methionyl-[protein] + [thioredoxin]-disulfide + H2O = L-methionyl-(R)-S-oxide-[protein] + [thioredoxin]-dithiol. The chain is Peptide methionine sulfoxide reductase MsrB from Burkholderia mallei (strain NCTC 10229).